The primary structure comprises 77 residues: Sec-independent protein translocase protein TatA 2 (77 aa).

The helical transmembrane segment at 2–22 threads the bilayer; the sequence is FPGGISMTELIIILAVILLLF. Residues 52–77 are disordered; sequence KEVKAEDVKTEERKEEKKEEKEKVEA.

Belongs to the TatA/E family. In terms of assembly, forms a complex with TatC.

It localises to the cell inner membrane. In terms of biological role, part of the twin-arginine translocation (Tat) system that transports large folded proteins containing a characteristic twin-arginine motif in their signal peptide across membranes. TatA could form the protein-conducting channel of the Tat system. The polypeptide is Sec-independent protein translocase protein TatA 2 (Aquifex aeolicus (strain VF5)).